Reading from the N-terminus, the 201-residue chain is Small ribosomal subunit protein uS4c (201 aa).

Positions 20-43 are disordered; the sequence is GLTSKRPRAGSDLRNQSRSGKRSQ. Residues 89 to 149 form the S4 RNA-binding domain; sequence MRLDNILFRL…DEQKSRALIQ (61 aa).

The protein belongs to the universal ribosomal protein uS4 family. As to quaternary structure, part of the 30S ribosomal subunit. Contacts protein S5. The interaction surface between S4 and S5 is involved in control of translational fidelity.

Its subcellular location is the plastid. It is found in the chloroplast. One of the primary rRNA binding proteins, it binds directly to 16S rRNA where it nucleates assembly of the body of the 30S subunit. Its function is as follows. With S5 and S12 plays an important role in translational accuracy. The polypeptide is Small ribosomal subunit protein uS4c (rps4) (Buxus microphylla (Littleleaf boxwood)).